A 91-amino-acid polypeptide reads, in one-letter code: PqqA binding protein (91 aa).

It belongs to the PqqD family. In terms of assembly, monomer. Interacts with PqqE.

Its pathway is cofactor biosynthesis; pyrroloquinoline quinone biosynthesis. In terms of biological role, functions as a PqqA binding protein and presents PqqA to PqqE, in the pyrroloquinoline quinone (PQQ) biosynthetic pathway. The polypeptide is PqqA binding protein (Pseudomonas fluorescens (strain SBW25)).